We begin with the raw amino-acid sequence, 56 residues long: MSRRRGIMSSKLKEELAKELGFYDTVQAEGWGAIRAKDAGNMVKRAVELAQQQLKQ.

Belongs to the alpha/beta-type SASP family.

In terms of biological role, may play some important role in either sporulation or the dormant spore. This Priestia megaterium (strain ATCC 12872 / QMB1551) (Bacillus megaterium) protein is Protein SspF (sspF).